Consider the following 1694-residue polypeptide: Homeobox-DDT domain protein RLT2 (1694 aa).

Residues 1-24 (MEGGSEKTTPEGCGGESKSKRKMK) form a disordered region. The segment at residues 17–76 (SKSKRKMKTAAQLEVLENTYSAEPYPSEAIRADLSVKLNLSDRQLQMWFCHRRLKERKST) is a DNA-binding region (homeobox). A DDT domain is found at 514 to 573 (DENVANLLMVWRFLITFADVLGLWPFTLDEFAQAFHDYDPRLMGEIHIVLLKTIIKDIEG). Positions 696–765 (GTVKFAAFHV…APSTYCVRAS (70 aa)) constitute an HTH HARE-type domain. Acidic residues predominate over residues 795–816 (EDVDDAERDEDSESDVGEDPEV). Disordered regions lie at residues 795 to 822 (EDVD…NLKK), 1450 to 1541 (KQEE…ICNE), 1555 to 1639 (AKTS…MNMK), and 1655 to 1674 (EDSY…AATR). 2 positions are modified to phosphoserine: Ser-806 and Ser-808. Positions 1459–1470 (GLGGVSSSGRGG) are enriched in gly residues. 2 stretches are compositionally biased toward basic residues: residues 1471–1485 (RPPR…RGNG) and 1515–1531 (GGRK…RKRP). Acidic residues-rich tracts occupy residues 1561–1578 (DNDD…DDGE), 1589–1605 (EDYD…DFDG), and 1624–1635 (DEYEEEEEEEED).

In terms of assembly, interacts with CHR11. Interacts (via the DDT domain) with CHR11 (via C-terminus). Highly expressed in growing tissues such as inflorescence and flower meristems, young leaves and floral organs. Expressed in roots, rosette and cauline leaves, stems, flowers, inflorescences and siliques.

The protein localises to the nucleus. In terms of biological role, transcriptional regulator required for the maintenance of the plant vegetative phase. In association with CHR11 or CHR17 may prevent the early activation of the vegetative-to-reproductive transition by regulating key genes that contribute to flower timing, such as FT, SEP1, SEP3, AGL8/FUL, SOC1 and FLC. Involved in the transcriptional regulation of seed-specific gene expression. This chain is Homeobox-DDT domain protein RLT2, found in Arabidopsis thaliana (Mouse-ear cress).